The following is a 261-amino-acid chain: X-box-binding protein 1 (261 aa).

Residues Met-1 to Asn-185 are Cytoplasmic-facing. A compositionally biased stretch (low complexity) spans Thr-27–Pro-37. The tract at residues Thr-27–Thr-65 is disordered. Ser-47 and Ser-68 each carry phosphoserine. A bZIP domain is found at Glu-70 to Leu-133. Residues Lys-72 to Arg-94 are basic motif. The nuclear localization signal (NLS) stretch occupies residues Arg-76 to Lys-92. The leucine-zipper stretch occupies residues Leu-98–Leu-133. The chain crosses the membrane as a helical; Signal-anchor for type II membrane protein span at residues Ile-186 to Ser-203. Residues Cys-204–Asn-261 lie on the Lumenal side of the membrane.

This sequence belongs to the bZIP family. As to quaternary structure, isoform 1 interacts with HM13. Isoform 1 interacts with RNF139; the interaction induces ubiquitination and degradation of isoform 1. Isoform 1 interacts (via luminal domain) with DERL1; the interaction obviates the need for ectodomain shedding prior HM13/SPP-mediated XBP1 isoform 1 cleavage. Isoform 1 interacts with HDAC3 and AKT1; the interactions occur in endothelial cell (EC) under disturbed flow. Isoform 1 interacts with the oncoprotein FOS. Interacts with SIRT1. Post-translationally, isoform 1 is ubiquitinated, leading to proteasome-mediated degradation in response to ER stress. In terms of processing, X-box-binding protein 1, cytoplasmic form and luminal form are produced by intramembrane proteolytic cleavage of ER membrane-anchored isoform 1 triggered by HM13/SPP in a DERL1-RNF139-dependent and VCP/p97-independent manner. X-box-binding protein 1, luminal form is ubiquitinated leading to proteasomal degradation. Acetylated by EP300; acetylation positively regulates the transcriptional activity of XBP1. Deacetylated by SIRT1; deacetylation negatively regulates the transcriptional activity of XBP1.

The protein resides in the nucleus. The protein localises to the endoplasmic reticulum. It is found in the cytoplasm. It localises to the endoplasmic reticulum membrane. Its subcellular location is the membrane. Its function is as follows. Functions as a transcription factor during endoplasmic reticulum (ER) stress by regulating the unfolded protein response (UPR). Required for cardiac myogenesis and hepatogenesis during embryonic development, and the development of secretory tissues such as exocrine pancreas and salivary gland. Involved in terminal differentiation of B lymphocytes to plasma cells and production of immunoglobulins. Modulates the cellular response to ER stress in a PIK3R-dependent manner. Binds to the cis-acting X box present in the promoter regions of major histocompatibility complex class II genes. Involved in VEGF-induced endothelial cell (EC) proliferation and retinal blood vessel formation during embryonic development but also for angiogenesis in adult tissues under ischemic conditions. Functions also as a major regulator of the UPR in obesity-induced insulin resistance and type 2 diabetes for the management of obesity and diabetes prevention. Acts as a weak transcriptional factor. Together with HDAC3, contributes to the activation of NFE2L2-mediated HMOX1 transcription factor gene expression in a PI(3)K/mTORC2/Akt-dependent signaling pathway leading to EC survival under disturbed flow/oxidative stress. Binds to the ER stress response element (ERSE) upon ER stress. Binds to the consensus 5'-GATGACGTG[TG]N(3)[AT]T-3' sequence related to cAMP responsive element (CRE)-like sequences. Associates preferentially to the HDAC3 gene promoter region in a static flow-dependent manner. Binds to the CDH5/VE-cadherin gene promoter region. The sequence is that of X-box-binding protein 1 from Bos taurus (Bovine).